Consider the following 544-residue polypeptide: Membrane protein insertase YidC (544 aa).

The next 5 helical transmembrane spans lie at 15–35, 321–341, 343–363, 409–429, and 506–526; these read LFLI…MLSF, LWYL…DVIP, WGLS…PLTF, LGGC…YSLV, and MPIM…IYWI.

The protein belongs to the OXA1/ALB3/YidC family. Type 1 subfamily. As to quaternary structure, interacts with the Sec translocase complex via SecD. Specifically interacts with transmembrane segments of nascent integral membrane proteins during membrane integration.

Its subcellular location is the cell inner membrane. Its function is as follows. Required for the insertion and/or proper folding and/or complex formation of integral membrane proteins into the membrane. Involved in integration of membrane proteins that insert both dependently and independently of the Sec translocase complex, as well as at least some lipoproteins. Aids folding of multispanning membrane proteins. The protein is Membrane protein insertase YidC of Borrelia garinii subsp. bavariensis (strain ATCC BAA-2496 / DSM 23469 / PBi) (Borreliella bavariensis).